A 556-amino-acid chain; its full sequence is 2-succinyl-5-enolpyruvyl-6-hydroxy-3-cyclohexene-1-carboxylate synthase (556 aa).

It belongs to the TPP enzyme family. MenD subfamily. Homodimer. Mg(2+) is required as a cofactor. Mn(2+) serves as cofactor. It depends on thiamine diphosphate as a cofactor.

The enzyme catalyses isochorismate + 2-oxoglutarate + H(+) = 5-enolpyruvoyl-6-hydroxy-2-succinyl-cyclohex-3-ene-1-carboxylate + CO2. It participates in quinol/quinone metabolism; 1,4-dihydroxy-2-naphthoate biosynthesis; 1,4-dihydroxy-2-naphthoate from chorismate: step 2/7. The protein operates within quinol/quinone metabolism; menaquinone biosynthesis. In terms of biological role, catalyzes the thiamine diphosphate-dependent decarboxylation of 2-oxoglutarate and the subsequent addition of the resulting succinic semialdehyde-thiamine pyrophosphate anion to isochorismate to yield 2-succinyl-5-enolpyruvyl-6-hydroxy-3-cyclohexene-1-carboxylate (SEPHCHC). This chain is 2-succinyl-5-enolpyruvyl-6-hydroxy-3-cyclohexene-1-carboxylate synthase, found in Escherichia coli O17:K52:H18 (strain UMN026 / ExPEC).